Consider the following 377-residue polypeptide: MTVGERITLADLPLRDDLRGKSPYGAPQLQVPVRLNTNENPHPPSQALVDDVTRSVGEAAAELHRYPDRDAVALRSDLADYLNLRTGVELSVENLWAANGSNEVLQQLLQAFGGPGRSAIGFVPSYSMHPIIADATRTEWLQALRADDFGLDVDTAVREIAARRPDLVFVTSPNNPSGQSVPLEDLRRLLDAMETGILILDEAYGEFSSQPSGVALIDQYPTKLVVSRTMSKAFAFAGGRLGYLVAAPAVIEAMLLVRLPYHLSSLTQAAARAALRHADDTLASVATLIAERDRVANSLSQLGFRVVPSDANFILFGEFADAPATWRRYLDQGVLIRDVGIPGYLRTTIGLAEENDALLTASARLVETELAATLGAS.

At K232 the chain carries N6-(pyridoxal phosphate)lysine.

Belongs to the class-II pyridoxal-phosphate-dependent aminotransferase family. Histidinol-phosphate aminotransferase subfamily. As to quaternary structure, homodimer. The cofactor is pyridoxal 5'-phosphate.

The enzyme catalyses L-histidinol phosphate + 2-oxoglutarate = 3-(imidazol-4-yl)-2-oxopropyl phosphate + L-glutamate. It functions in the pathway amino-acid biosynthesis; L-histidine biosynthesis; L-histidine from 5-phospho-alpha-D-ribose 1-diphosphate: step 7/9. This Mycobacterium sp. (strain JLS) protein is Histidinol-phosphate aminotransferase.